A 193-amino-acid chain; its full sequence is Ribosomal RNA large subunit methyltransferase E (193 aa).

S-adenosyl-L-methionine is bound by residues G51, W53, D69, D85, and D108. K148 (proton acceptor) is an active-site residue.

Belongs to the class I-like SAM-binding methyltransferase superfamily. RNA methyltransferase RlmE family.

It is found in the cytoplasm. The catalysed reaction is uridine(2552) in 23S rRNA + S-adenosyl-L-methionine = 2'-O-methyluridine(2552) in 23S rRNA + S-adenosyl-L-homocysteine + H(+). In terms of biological role, specifically methylates the uridine in position 2552 of 23S rRNA at the 2'-O position of the ribose in the fully assembled 50S ribosomal subunit. This chain is Ribosomal RNA large subunit methyltransferase E, found in Methanoregula boonei (strain DSM 21154 / JCM 14090 / 6A8).